A 550-amino-acid chain; its full sequence is Genetic interactor of prohibitins 3, mitochondrial (550 aa).

The transit peptide at 1–43 (MKSRLQAFKQFTRFVSCKSCGVELQSKNPSVTGYYKPPRAVRK) directs the protein to the mitochondrion. A CP-type G domain is found at 107–298 (IHSFNDIKGA…VNDLPGYTMD (192 aa)).

Belongs to the TRAFAC class YlqF/YawG GTPase family. GEP3 subfamily.

It is found in the mitochondrion. Its function is as follows. May be involved in the mitochondrial lipid metabolism. The polypeptide is Genetic interactor of prohibitins 3, mitochondrial (GEP3) (Kluyveromyces lactis (strain ATCC 8585 / CBS 2359 / DSM 70799 / NBRC 1267 / NRRL Y-1140 / WM37) (Yeast)).